Reading from the N-terminus, the 364-residue chain is Chorismate synthase (364 aa).

Residues R48 and R54 each contribute to the NADP(+) site. FMN-binding positions include 130-132, 242-243, G287, 302-306, and R328; these read RSS, NA, and KPTSS.

It belongs to the chorismate synthase family. In terms of assembly, homotetramer. FMNH2 is required as a cofactor.

The enzyme catalyses 5-O-(1-carboxyvinyl)-3-phosphoshikimate = chorismate + phosphate. Its pathway is metabolic intermediate biosynthesis; chorismate biosynthesis; chorismate from D-erythrose 4-phosphate and phosphoenolpyruvate: step 7/7. In terms of biological role, catalyzes the anti-1,4-elimination of the C-3 phosphate and the C-6 proR hydrogen from 5-enolpyruvylshikimate-3-phosphate (EPSP) to yield chorismate, which is the branch point compound that serves as the starting substrate for the three terminal pathways of aromatic amino acid biosynthesis. This reaction introduces a second double bond into the aromatic ring system. This is Chorismate synthase from Allorhizobium ampelinum (strain ATCC BAA-846 / DSM 112012 / S4) (Agrobacterium vitis (strain S4)).